The sequence spans 885 residues: Protein transport protein SEC24-1 (885 aa).

Cysteine 164, cysteine 167, cysteine 186, and cysteine 189 together coordinate Zn(2+). Residues 164–189 form a zinc finger-like region; sequence CRRCRSYLNPFVAFIEQGRRWQCNIC. The interval 296–332 is disordered; that stretch reads DDYEESDDDDDEDDDDEEEDNEEEEEEEEDEEDDDDS.

Belongs to the SEC23/SEC24 family. SEC24 subfamily. In terms of assembly, the COPII coat is composed of at least 5 proteins: the SEC23/24 complex, the SEC13/31 complex, and the protein SAR1. Golgi apparatus membrane; Peripheral membrane protein; Cytoplasmic side.

The protein localises to the cytoplasm. It is found in the cytoplasmic vesicle. Its subcellular location is the COPII-coated vesicle membrane. The protein resides in the endoplasmic reticulum membrane. It localises to the golgi apparatus membrane. Its function is as follows. Component of the coat protein complex II (COPII) which promotes the formation of transport vesicles from the endoplasmic reticulum (ER). The coat has two main functions, the physical deformation of the endoplasmic reticulum membrane into vesicles and the selection of cargo molecules. The polypeptide is Protein transport protein SEC24-1 (SEC241) (Saccharomyces uvarum (strain ATCC 76518 / CBS 7001 / CLIB 283 / NBRC 10550 / MCYC 623 / NCYC 2669 / NRRL Y-11845) (Yeast)).